A 358-amino-acid chain; its full sequence is Transcription factor PCF6 (358 aa).

The interval 1–29 (MEAAVGDGEGGGGGGGRGKRGRGGGGGEM) is disordered. The segment covering 7–16 (DGEGGGGGGG) has biased composition (gly residues). A TCP domain is found at 52–110 (GKDRHSKVYTAKGIRDRRVRLSVATAIQFYDLQDRLGFDQPSKAIEWLINAASPAIDTL). 2 disordered regions span residues 127–163 (ADAA…DKEV) and 282–308 (ANRG…QQLQ). Polar residues-rich tracts occupy residues 143–156 (LSNK…SETS) and 285–296 (GTLQSNSPSNMS).

In terms of assembly, forms homodimers and heterodimers.

It localises to the nucleus. Transcription activator. Binds the promoter core sequence 5'-GGNCC-3'. This Oryza sativa subsp. indica (Rice) protein is Transcription factor PCF6 (PCF6).